A 176-amino-acid polypeptide reads, in one-letter code: 3-hydroxydecanoyl-[acyl-carrier-protein] dehydratase (176 aa).

The active site involves His71.

This sequence belongs to the thioester dehydratase family. FabA subfamily. As to quaternary structure, homodimer.

It localises to the cytoplasm. The catalysed reaction is a (3R)-hydroxyacyl-[ACP] = a (2E)-enoyl-[ACP] + H2O. It catalyses the reaction (3R)-hydroxydecanoyl-[ACP] = (2E)-decenoyl-[ACP] + H2O. The enzyme catalyses (2E)-decenoyl-[ACP] = (3Z)-decenoyl-[ACP]. It functions in the pathway lipid metabolism; fatty acid biosynthesis. Necessary for the introduction of cis unsaturation into fatty acids. Catalyzes the dehydration of (3R)-3-hydroxydecanoyl-ACP to E-(2)-decenoyl-ACP and then its isomerization to Z-(3)-decenoyl-ACP. Can catalyze the dehydratase reaction for beta-hydroxyacyl-ACPs with saturated chain lengths up to 16:0, being most active on intermediate chain length. The polypeptide is 3-hydroxydecanoyl-[acyl-carrier-protein] dehydratase (Afipia carboxidovorans (strain ATCC 49405 / DSM 1227 / KCTC 32145 / OM5) (Oligotropha carboxidovorans)).